A 72-amino-acid chain; its full sequence is BBSome-interacting protein 1 (72 aa).

The protein belongs to the BBIP10 family.

The protein localises to the cell projection. It localises to the cilium. The protein resides in the cytoplasm. Its function is as follows. Required for primary cilia assembly. The chain is BBSome-interacting protein 1 (bbip1) from Danio rerio (Zebrafish).